A 129-amino-acid chain; its full sequence is Small ribosomal subunit protein uS11 (129 aa).

The protein belongs to the universal ribosomal protein uS11 family. In terms of assembly, part of the 30S ribosomal subunit. Interacts with proteins S7 and S18. Binds to IF-3.

Functionally, located on the platform of the 30S subunit, it bridges several disparate RNA helices of the 16S rRNA. Forms part of the Shine-Dalgarno cleft in the 70S ribosome. This chain is Small ribosomal subunit protein uS11, found in Bradyrhizobium diazoefficiens (strain JCM 10833 / BCRC 13528 / IAM 13628 / NBRC 14792 / USDA 110).